The primary structure comprises 357 residues: Chorismate synthase (357 aa).

Position 47 (R47) interacts with NADP(+). FMN is bound by residues R123–S125, G281, K296–S300, and R324.

The protein belongs to the chorismate synthase family. As to quaternary structure, homotetramer. The cofactor is FMNH2.

The catalysed reaction is 5-O-(1-carboxyvinyl)-3-phosphoshikimate = chorismate + phosphate. It functions in the pathway metabolic intermediate biosynthesis; chorismate biosynthesis; chorismate from D-erythrose 4-phosphate and phosphoenolpyruvate: step 7/7. Catalyzes the anti-1,4-elimination of the C-3 phosphate and the C-6 proR hydrogen from 5-enolpyruvylshikimate-3-phosphate (EPSP) to yield chorismate, which is the branch point compound that serves as the starting substrate for the three terminal pathways of aromatic amino acid biosynthesis. This reaction introduces a second double bond into the aromatic ring system. The chain is Chorismate synthase from Chlamydia muridarum (strain MoPn / Nigg).